A 712-amino-acid chain; its full sequence is Interleukin-1 receptor-associated kinase 1 (712 aa).

In terms of domain architecture, Death spans 27–106; sequence MCRFYKVMDA…DIITAWHPPA (80 aa). Threonine 66 bears the Phosphothreonine; by PKC/PRKCI mark. Positions 105-187 are disordered; it reads PAPLPSPGTT…STKPGPESSV (83 aa). Residues 110-211 form a proST region region; it reads SPGTTAPRPS…LCEISRGTHN (102 aa). Low complexity predominate over residues 115 to 133; that stretch reads APRPSSIPAPAEAEAWSPR. Serine 131 is modified (phosphoserine). A Glycyl lysine isopeptide (Lys-Gly) (interchain with G-Cter in ubiquitin) cross-link involves residue lysine 134. Polar residues predominate over residues 137–154; sequence SSASTFLSPAFPGSQTHS. Residue lysine 180 forms a Glycyl lysine isopeptide (Lys-Gly) (interchain with G-Cter in ubiquitin) linkage. Threonine 209 is modified (phosphothreonine; by IRAK4). A Protein kinase domain is found at 212–521; sequence FSEELKIGEG…TQVYERLEKL (310 aa). ATP contacts are provided by residues 218–226 and lysine 239; that span reads IGEGGFGCV. Aspartate 340 acts as the Proton acceptor in catalysis. ATP-binding positions include 342–345 and aspartate 358; that span reads KSSN. Phosphoserine is present on residues serine 371 and serine 375. At threonine 387 the chain carries Phosphothreonine. Disordered regions lie at residues 532–591, 613–660, and 690–712; these read SEAA…SDES, APLR…PPQI, and SSLP…EFQS. Residues 543-553 are compositionally biased toward polar residues; sequence QENSYVSSTGR. Serine 556 carries the phosphoserine modification. 2 stretches are compositionally biased toward low complexity: residues 562-575 and 643-658; these read QPLA…AQAA and EGLA…SEPP.

Belongs to the protein kinase superfamily. TKL Ser/Thr protein kinase family. Pelle subfamily. As to quaternary structure, homodimer. Forms a complex with TRAF6, PELI1, IRAK4 and MYD88. Direct binding of SMAD6 to PELI1 prevents complex formation and hence negatively regulates IL1R-TLR signaling and eventually NF-kappa-B-mediated gene expression. The TRAF6-PELI1-IRAK4-MYD88 complex recruits MAP3K7/TAK1, TAB1 and TAB2 to mediate NF-kappa-B activation. Interaction with MYD88 recruits IRAK1 to the stimulated receptor complex. Interacts with TOLLIP; this interaction occurs in the cytosol prior to receptor activation. Interacts with IL1RL1. Interacts with PELI1 and TRAF6. Interacts (when polyubiquitinated) with IKBKG/NEMO. Interacts with RSAD2/viperin. Interacts with IRAK1BP1. Interacts with PELI2. Interacts with ZC3H12A; this interaction increases the interaction between ZC3H12A and IKBKB/IKKB. Interacts with IRAK4. Interacts with PELI3. Interacts with INAVA; the interaction takes place upon PRR stimulation. Interacts (via C-terminus) with NFATC4 (via N-terminus). In terms of assembly, (Microbial infection) Interacts with mumps virus protein SH; this interaction inhibits downstream NF-kappa-B pathway activation. (Microbial infection) Interacts with alphaviruses SINV, CHIKV, RRV, VEEV and EEEV capsid proteins; the interactions lead to inhibition of IRAK1-dependent signaling. Mg(2+) serves as cofactor. Post-translationally, following recruitment on the activated receptor complex, phosphorylated on Thr-209, probably by IRAK4, resulting in a conformational change of the kinase domain, allowing further phosphorylations to take place. Thr-387 phosphorylation in the activation loop is required to achieve full enzymatic activity. In terms of processing, polyubiquitinated by TRAF6 after cell stimulation with IL-1-beta by PELI1, PELI2 and PELI3. Polyubiquitination occurs with polyubiquitin chains linked through 'Lys-63'. Ubiquitination promotes interaction with NEMO/IKBKG. Also sumoylated; leading to nuclear translocation. As to expression, isoform 1 and isoform 2 are ubiquitously expressed in all tissues examined, with isoform 1 being more strongly expressed than isoform 2.

It localises to the cytoplasm. The protein localises to the nucleus. It is found in the lipid droplet. It catalyses the reaction L-seryl-[protein] + ATP = O-phospho-L-seryl-[protein] + ADP + H(+). The catalysed reaction is L-threonyl-[protein] + ATP = O-phospho-L-threonyl-[protein] + ADP + H(+). Its function is as follows. Serine/threonine-protein kinase that plays a critical role in initiating innate immune response against foreign pathogens. Involved in Toll-like receptor (TLR) and IL-1R signaling pathways. Is rapidly recruited by MYD88 to the receptor-signaling complex upon TLR activation. Association with MYD88 leads to IRAK1 phosphorylation by IRAK4 and subsequent autophosphorylation and kinase activation. Phosphorylates E3 ubiquitin ligases Pellino proteins (PELI1, PELI2 and PELI3) to promote pellino-mediated polyubiquitination of IRAK1. Then, the ubiquitin-binding domain of IKBKG/NEMO binds to polyubiquitinated IRAK1 bringing together the IRAK1-MAP3K7/TAK1-TRAF6 complex and the NEMO-IKKA-IKKB complex. In turn, MAP3K7/TAK1 activates IKKs (CHUK/IKKA and IKBKB/IKKB) leading to NF-kappa-B nuclear translocation and activation. Alternatively, phosphorylates TIRAP to promote its ubiquitination and subsequent degradation. Phosphorylates the interferon regulatory factor 7 (IRF7) to induce its activation and translocation to the nucleus, resulting in transcriptional activation of type I IFN genes, which drive the cell in an antiviral state. When sumoylated, translocates to the nucleus and phosphorylates STAT3. In Homo sapiens (Human), this protein is Interleukin-1 receptor-associated kinase 1.